Consider the following 154-residue polypeptide: Lipoprotein signal peptidase (154 aa).

Helical transmembrane passes span 55–75 (GHMW…IYIM) and 84–104 (LFSI…IDRV). Catalysis depends on residues Asp111 and Asp129. Residues 124 to 144 (IFNVADASLSVGVVLMLVYVF) form a helical membrane-spanning segment.

Belongs to the peptidase A8 family.

It localises to the cell membrane. The catalysed reaction is Release of signal peptides from bacterial membrane prolipoproteins. Hydrolyzes -Xaa-Yaa-Zaa-|-(S,diacylglyceryl)Cys-, in which Xaa is hydrophobic (preferably Leu), and Yaa (Ala or Ser) and Zaa (Gly or Ala) have small, neutral side chains.. Its pathway is protein modification; lipoprotein biosynthesis (signal peptide cleavage). Its function is as follows. This protein specifically catalyzes the removal of signal peptides from prolipoproteins. This chain is Lipoprotein signal peptidase, found in Listeria welshimeri serovar 6b (strain ATCC 35897 / DSM 20650 / CCUG 15529 / CIP 8149 / NCTC 11857 / SLCC 5334 / V8).